Here is a 329-residue protein sequence, read N- to C-terminus: GDP-mannose transporter (329 aa).

Topologically, residues 1–13 (MSELKVDTGRLSH) are cytoplasmic. The helical transmembrane segment at 14–34 (IANSGPMSILAYCASSILMTV) threads the bilayer. Topologically, residues 35 to 44 (TNKCVVGSDK) are lumenal. The chain crosses the membrane as a helical span at residues 45 to 65 (FNMLFVMLFAQSLVCVTALVL). At 66–79 (LKALGYVQYRPLNK) the chain is on the cytoplasmic side. A helical membrane pass occupies residues 80-100 (VDVKNWLLISVLLVLMTYTSS). At 101–109 (RALKYLAVP) the chain is on the lumenal side. Residues 110 to 130 (IYTIFKNLTIILIAYGEVLFF) form a helical membrane-spanning segment. Over 131 to 133 (GGR) the chain is Cytoplasmic. A helical transmembrane segment spans residues 134–154 (VTAMELSSFLLIVLSSVVATL). Residues 155–174 (GDQQALAKKPLAAAVESILG) lie on the Lumenal side of the membrane. Residues 175–195 (LNVGYFWMFTNCICSALFVLI) traverse the membrane as a helical segment. The Cytoplasmic portion of the chain corresponds to 196-214 (MRKRIALTKFKDFDTMFYN). A helical membrane pass occupies residues 215–235 (NILSLPLLMLASFMFEDWGAA). At 236 to 245 (NIARNLTKDY) the chain is on the lumenal side. N-linked (GlcNAc...) asparagine glycosylation occurs at Asn240. Residues 246–266 (IIIMIISGLASVGISYCSGWC) traverse the membrane as a helical segment. The Cytoplasmic portion of the chain corresponds to 267–273 (VRVTSST). A helical membrane pass occupies residues 274–294 (TYSMVGALNKLPIALSGLLFF). Topologically, residues 295–298 (DAPK) are lumenal. Residues 299-319 (NFLSIFSIFLGFLSGIVYAVA) form a helical membrane-spanning segment. At 320 to 329 (KQKKQSQPAN) the chain is on the cytoplasmic side.

Belongs to the TPT transporter family. SLC35D subfamily. Homooligomer.

Its subcellular location is the golgi apparatus membrane. The protein resides in the cytoplasmic vesicle membrane. It is found in the endoplasmic reticulum membrane. Involved in the import of GDP-mannose from the cytoplasm into the Golgi lumen. This chain is GDP-mannose transporter (VRG4), found in Eremothecium gossypii (strain ATCC 10895 / CBS 109.51 / FGSC 9923 / NRRL Y-1056) (Yeast).